Here is a 306-residue protein sequence, read N- to C-terminus: Acetyl-coenzyme A carboxylase carboxyl transferase subunit beta (306 aa).

A CoA carboxyltransferase N-terminal domain is found at 25–294; sequence LWIKDPTSGE…VVNPSNTSST (270 aa). A compositionally biased stretch (low complexity) spans 287 to 296; that stretch reads NPSNTSSTNS. Residues 287–306 are disordered; it reads NPSNTSSTNSQASLSKAEAA.

This sequence belongs to the AccD/PCCB family. Acetyl-CoA carboxylase is a heterohexamer composed of biotin carboxyl carrier protein (AccB), biotin carboxylase (AccC) and two subunits each of ACCase subunit alpha (AccA) and ACCase subunit beta (AccD).

The protein localises to the cytoplasm. The catalysed reaction is N(6)-carboxybiotinyl-L-lysyl-[protein] + acetyl-CoA = N(6)-biotinyl-L-lysyl-[protein] + malonyl-CoA. It participates in lipid metabolism; malonyl-CoA biosynthesis; malonyl-CoA from acetyl-CoA: step 1/1. Functionally, component of the acetyl coenzyme A carboxylase (ACC) complex. Biotin carboxylase (BC) catalyzes the carboxylation of biotin on its carrier protein (BCCP) and then the CO(2) group is transferred by the transcarboxylase to acetyl-CoA to form malonyl-CoA. The sequence is that of Acetyl-coenzyme A carboxylase carboxyl transferase subunit beta from Bartonella henselae (strain ATCC 49882 / DSM 28221 / CCUG 30454 / Houston 1) (Rochalimaea henselae).